The chain runs to 34 residues: Chlorotoxin-like peptide AaCtx (34 aa).

Disulfide bonds link cysteine 2/cysteine 19, cysteine 5/cysteine 27, cysteine 16/cysteine 32, and cysteine 20/cysteine 34.

This sequence belongs to the short scorpion toxin superfamily. Chloride channel inhibitor family. Expressed by the venom gland.

The protein resides in the secreted. Toxin with unknown function in healthy organisms. On glioma cells, interacts with chloride channels (probably ClC-3/CLCN3) and MMP2 at the surface of glioma cells. This complex is then internalized via caveolae, thus inhibiting the chloride channels necessary for cell shrinkage and tumor propagation. Inhibits migration and invasion of U87 glioma cells expressing CLCN3/ClC-3 voltage-gated chloride channels. The sequence is that of Chlorotoxin-like peptide AaCtx from Androctonus australis (Sahara scorpion).